The sequence spans 551 residues: MSGGDGRGHNTGAHSTSGNINGGPTGLGVGGGASDGSGWSSENNPWGGGSGSGIHWGGGSGHGNGGGNGNSGGGSGTGGNLSAVAAPVAFGFPALSTPGAGGLAVSISAGALSAAIADIMAALKGPFKFGLWGVALYGVLPSQIAKDDPNMMSKIVTSLPADDITESPVSSLPLDKATVNVNVRVVDDVKDERQNISVVSGVPMSVPVVDAKPTERPGVFTASIPGAPVLNISVNNSTPAVQTLSPGVTNNTDKDVRPAGFTQGGNTRDAVIRFPKDSGHNAVYVSVSDVLSPDQVKQRQDEENRRQQEWDATHPVEAAERNYERARAELNQANEDVARNQERQAKAVQVYNSRKSELDAANKTLADAIAEIKQFNRFAHDPMAGGHRMWQMAGLKAQRAQTDVNNKQAAFDAAAKEKSDADAALSSAMESRKKKEDKKRSAENKLNEEKNKPRKGVKDYGHDYHPDPKTEDIKGLGELKEGKPKTPKQGGGGKRARWYGDKGRKIYEWDSQHGELEGYRASDGQHLGSFEPKTGNQLKGPDPKRNIKKYL.

Disordered regions lie at residues 1–74 (MSGG…SGGG), 244–269 (LSPG…NTRD), 293–317 (PDQV…HPVE), 406–501 (NKQA…WYGD), and 517–551 (EGYR…KKYL). Residues 20–35 (INGGPTGLGVGGGASD) show a composition bias toward gly residues. A compositionally biased stretch (low complexity) spans 36-45 (GSGWSSENNP). Residues 46 to 74 (WGGGSGSGIHWGGGSGHGNGGGNGNSGGG) are compositionally biased toward gly residues. Basic and acidic residues-rich tracts occupy residues 296–317 (VKQR…HPVE) and 430–484 (ESRK…EGKP). Residues 455–551 (KGVKDYGHDY…DPKRNIKKYL (97 aa)) are ribosome inactivating activity. The segment at 530-551 (FEPKTGNQLKGPDPKRNIKKYL) is binding of immunity protein.

This sequence belongs to the cloacin colicin family.

Inactivates ribosomes by hydrolyzing 16S RNA in 30S ribosomes at a specific site. Its function is as follows. Colicins are polypeptide toxins produced by and active against E.coli and closely related bacteria. The polypeptide is Colicin-E6 (Escherichia coli).